The primary structure comprises 88 residues: Mini zinc finger protein 3 (88 aa).

The ZF-HD dimerization-type; degenerate zinc finger occupies 26–72; that stretch reads YVECQKNHAANIGGYAVDGCREFMASGGDDALTCAACGCHRNFHRRE.

As to quaternary structure, homo- and heterodimers. Interacts with ZHD3, ZHD5, ZHD6, ZHD7, ZHD8, ZHD9, ZHD10 and ZHD13. As to expression, mostly expressed in roots, stems and flowers, present in seedlings and leaves, and weakly observed in inflorescence and siliques.

It is found in the cytoplasm. In terms of biological role, inhibits zinc finger homeodomain (ZHD) transcription factors by interacting with them to prevent both their nuclear localization and their DNA-binding properties. Involved in integrating signals from multiple hormones by regulating the expression of specific genes. Promotes the formation of ectopic shoot meristems on leaf margins. This chain is Mini zinc finger protein 3 (MIF3), found in Arabidopsis thaliana (Mouse-ear cress).